We begin with the raw amino-acid sequence, 200 residues long: MARYTGPSWKVSRRLGISLSGTGKELERRPYAPGQHGPTQRKKISEYGLQQAEKQKLRHMYGLTERQFKNTFNKAGKLQGKHGENFMILLEQRLDNIVYRLGLARTRRAARQLVNHGHITVDGKRVDIPSYQVSVGQVISVREKSAKNSAIAESLEVSSFVPEYVTFDAEKLTGSLNRLPERSELAAEINEAFIVEFYSR.

Residues 22 to 43 form a disordered region; sequence TGKELERRPYAPGQHGPTQRKK. Residues 92-170 form the S4 RNA-binding domain; that stretch reads QRLDNIVYRL…VPEYVTFDAE (79 aa).

The protein belongs to the universal ribosomal protein uS4 family. In terms of assembly, part of the 30S ribosomal subunit. Contacts protein S5. The interaction surface between S4 and S5 is involved in control of translational fidelity.

Its function is as follows. One of the primary rRNA binding proteins, it binds directly to 16S rRNA where it nucleates assembly of the body of the 30S subunit. Functionally, with S5 and S12 plays an important role in translational accuracy. This chain is Small ribosomal subunit protein uS4, found in Listeria monocytogenes serotype 4a (strain HCC23).